The chain runs to 481 residues: 3-isopropylmalate dehydratase large subunit (481 aa).

Residues Cys363, Cys423, and Cys426 each contribute to the [4Fe-4S] cluster site. The segment at 432–459 (DQLKPGERSASTSNRNFEGRQGPGGRTH) is disordered.

The protein belongs to the aconitase/IPM isomerase family. LeuC type 1 subfamily. In terms of assembly, heterodimer of LeuC and LeuD. The cofactor is [4Fe-4S] cluster.

It catalyses the reaction (2R,3S)-3-isopropylmalate = (2S)-2-isopropylmalate. The protein operates within amino-acid biosynthesis; L-leucine biosynthesis; L-leucine from 3-methyl-2-oxobutanoate: step 2/4. In terms of biological role, catalyzes the isomerization between 2-isopropylmalate and 3-isopropylmalate, via the formation of 2-isopropylmaleate. The sequence is that of 3-isopropylmalate dehydratase large subunit from Corynebacterium glutamicum (strain ATCC 13032 / DSM 20300 / JCM 1318 / BCRC 11384 / CCUG 27702 / LMG 3730 / NBRC 12168 / NCIMB 10025 / NRRL B-2784 / 534).